Consider the following 253-residue polypeptide: Homeobox protein EMX2 (253 aa).

Positions 155 to 214 form a DNA-binding region, homeobox; sequence PKRIRTAFSPSQLLRLEHAFEKNHYVVGAERKQLAHSLSLTETQVKVWFQNRRTKFKRQK. Residues 213–253 form a disordered region; that stretch reads QKLEEEGSDSQQKKKGTHHINRWRIATKQASPEEIDVTSDD. The span at 225–234 shows a compositional bias: basic residues; that stretch reads KKKGTHHINR.

The protein belongs to the EMX homeobox family. Interacts with translation initiation factor EIF4E.

The protein localises to the nucleus. It localises to the cell projection. The protein resides in the axon. Functionally, transcription factor, which in cooperation with EMX1, acts to generate the boundary between the roof and archipallium in the developing brain. May function in combination with OTX1/2 to specify cell fates in the developing central nervous system. In the inner ear, it controls the distribution of GPR156 at hair cell boundaries, and regulates the organization of stereociliary bundles in opposite orientations across the line of polarity reversal (LPR). The polypeptide is Homeobox protein EMX2 (EMX2) (Bos taurus (Bovine)).